The chain runs to 461 residues: Ornithine decarboxylase (461 aa).

N6-(pyridoxal phosphate)lysine is present on Lys69. Residues Ser200, Gly237, and 274–277 (EPGR) each bind pyridoxal 5'-phosphate. The residue at position 303 (Ser303) is a Phosphoserine; by CK2. 331–332 (YD) contacts substrate. Cys360 acts as the Proton donor; shared with dimeric partner in catalysis. Cys360 carries the post-translational modification S-nitrosocysteine. Asp361 serves as a coordination point for substrate. Residue Tyr389 participates in pyridoxal 5'-phosphate binding.

Belongs to the Orn/Lys/Arg decarboxylase class-II family. Homodimer. Only the dimer is catalytically active, as the active sites are constructed of residues from both monomers. Pyridoxal 5'-phosphate is required as a cofactor.

The enzyme catalyses L-ornithine + H(+) = putrescine + CO2. The protein operates within amine and polyamine biosynthesis; putrescine biosynthesis via L-ornithine pathway; putrescine from L-ornithine: step 1/1. Inhibited by antizymes (AZs) OAZ1, OAZ2 and OAZ3 in response to polyamine levels. AZs inhibit the assembly of the functional homodimer by binding to ODC monomers. Additionally, OAZ1 targets ODC monomers for ubiquitin-independent proteolytic destruction by the 26S proteasome. Catalyzes the first and rate-limiting step of polyamine biosynthesis that converts ornithine into putrescine, which is the precursor for the polyamines, spermidine and spermine. Polyamines are essential for cell proliferation and are implicated in cellular processes, ranging from DNA replication to apoptosis. This Bos taurus (Bovine) protein is Ornithine decarboxylase (ODC1).